A 274-amino-acid polypeptide reads, in one-letter code: Large ribosomal subunit protein uL2 (274 aa).

Residues 200 to 274 (HALEKSGKAG…SKYIIERRKK (75 aa)) are disordered. Composition is skewed to basic residues over residues 207 to 220 (KAGRSRWLGRRPRN) and 255 to 274 (LKTRAPKKHSSKYIIERRKK).

The protein belongs to the universal ribosomal protein uL2 family. In terms of assembly, part of the 50S ribosomal subunit. Forms a bridge to the 30S subunit in the 70S ribosome.

Its function is as follows. One of the primary rRNA binding proteins. Required for association of the 30S and 50S subunits to form the 70S ribosome, for tRNA binding and peptide bond formation. It has been suggested to have peptidyltransferase activity; this is somewhat controversial. Makes several contacts with the 16S rRNA in the 70S ribosome. This chain is Large ribosomal subunit protein uL2, found in Parabacteroides distasonis (strain ATCC 8503 / DSM 20701 / CIP 104284 / JCM 5825 / NCTC 11152).